A 249-amino-acid chain; its full sequence is Aspartate/glutamate leucyltransferase (249 aa).

Belongs to the R-transferase family. Bpt subfamily.

It localises to the cytoplasm. It catalyses the reaction N-terminal L-glutamyl-[protein] + L-leucyl-tRNA(Leu) = N-terminal L-leucyl-L-glutamyl-[protein] + tRNA(Leu) + H(+). It carries out the reaction N-terminal L-aspartyl-[protein] + L-leucyl-tRNA(Leu) = N-terminal L-leucyl-L-aspartyl-[protein] + tRNA(Leu) + H(+). Functions in the N-end rule pathway of protein degradation where it conjugates Leu from its aminoacyl-tRNA to the N-termini of proteins containing an N-terminal aspartate or glutamate. This chain is Aspartate/glutamate leucyltransferase, found in Brucella anthropi (strain ATCC 49188 / DSM 6882 / CCUG 24695 / JCM 21032 / LMG 3331 / NBRC 15819 / NCTC 12168 / Alc 37) (Ochrobactrum anthropi).